Reading from the N-terminus, the 379-residue chain is MSKRDYYETLEVSQDASEKEIKKAYKKLAMKYHPDRTQGDKSKEETFKEVKEAYEILNDDQKRAAYDQYGHAAFEQGGHGGGGGGHGGGFGQDFGDIFGDIFGGGGGGGRGRQRQQRGSDLRYNVELSLEDAVKGKSLEIKVPTYVSCEPCDGSGAKKGTSAKTCSTCHGHGQVQMRQGLFAVQQTCPTCSGKGKVIADKCTSCRGQGRVEKTKTLSVKIPAGVDTGDRIRLSGEGEAGEHGAPAGDLYVQVNVRDHDIFVRDENHLYCEVPISFVTASLGGEIEVPTLGGKVKLKVPKETQTGKMFRLRGKGVKSVRSTSTGDLMCKVVIETPVNLSGDQADLLRQLEEKMASSSKKHSPKETGFFDGVKKFFDDLKS.

Residues 5–70 (DYYETLEVSQ…QKRAAYDQYG (66 aa)) enclose the J domain. The CR-type zinc-finger motif lies at 135 to 213 (GKSLEIKVPT…CRGQGRVEKT (79 aa)). The Zn(2+) site is built by C148, C151, C165, C168, C187, C190, C201, and C204. CXXCXGXG motif repeat units follow at residues 148–155 (CEPCDGSG), 165–172 (CSTCHGHG), 187–194 (CPTCSGKG), and 201–208 (CTSCRGQG).

The protein belongs to the DnaJ family. In terms of assembly, homodimer. Requires Zn(2+) as cofactor.

It is found in the cytoplasm. In terms of biological role, participates actively in the response to hyperosmotic and heat shock by preventing the aggregation of stress-denatured proteins and by disaggregating proteins, also in an autonomous, DnaK-independent fashion. Unfolded proteins bind initially to DnaJ; upon interaction with the DnaJ-bound protein, DnaK hydrolyzes its bound ATP, resulting in the formation of a stable complex. GrpE releases ADP from DnaK; ATP binding to DnaK triggers the release of the substrate protein, thus completing the reaction cycle. Several rounds of ATP-dependent interactions between DnaJ, DnaK and GrpE are required for fully efficient folding. Also involved, together with DnaK and GrpE, in the DNA replication of plasmids through activation of initiation proteins. This is Chaperone protein DnaJ from Colwellia maris.